The sequence spans 167 residues: NAD(P)H-quinone oxidoreductase subunit I, chloroplastic (167 aa).

4Fe-4S ferredoxin-type domains lie at 55 to 84 and 95 to 124; these read GRIH…VDWK and LNYS…MTEE. [4Fe-4S] cluster-binding residues include cysteine 64, cysteine 67, cysteine 70, cysteine 74, cysteine 104, cysteine 107, cysteine 110, and cysteine 114.

Belongs to the complex I 23 kDa subunit family. As to quaternary structure, NDH is composed of at least 16 different subunits, 5 of which are encoded in the nucleus. [4Fe-4S] cluster is required as a cofactor.

Its subcellular location is the plastid. It localises to the chloroplast thylakoid membrane. The catalysed reaction is a plastoquinone + NADH + (n+1) H(+)(in) = a plastoquinol + NAD(+) + n H(+)(out). It carries out the reaction a plastoquinone + NADPH + (n+1) H(+)(in) = a plastoquinol + NADP(+) + n H(+)(out). Its function is as follows. NDH shuttles electrons from NAD(P)H:plastoquinone, via FMN and iron-sulfur (Fe-S) centers, to quinones in the photosynthetic chain and possibly in a chloroplast respiratory chain. The immediate electron acceptor for the enzyme in this species is believed to be plastoquinone. Couples the redox reaction to proton translocation, and thus conserves the redox energy in a proton gradient. This chain is NAD(P)H-quinone oxidoreductase subunit I, chloroplastic, found in Pelargonium hortorum (Common geranium).